The sequence spans 523 residues: Putative oxidoreductase TDA3 (523 aa).

A compositionally biased stretch (low complexity) spans 157–172 (NSSLSSSGSSLKNDSA). The tract at residues 157–189 (NSSLSSSGSSLKNDSASNEEEGSDIHVSSSVPS) is disordered. Phosphoserine is present on residues serine 189, serine 204, and serine 306.

Belongs to the TDA3 family. In terms of assembly, interacts with BTN2.

The protein localises to the cytoplasm. Its subcellular location is the late endosome. Its function is as follows. Putative oxidoreductase that negatively regulates the retrieval of cargo from late endosomes to the Golgi. Regulates YIF1 and KEX2 localization. Required for fast DNA replication. This chain is Putative oxidoreductase TDA3 (TDA3), found in Saccharomyces cerevisiae (strain ATCC 204508 / S288c) (Baker's yeast).